Here is a 361-residue protein sequence, read N- to C-terminus: Phosphoserine aminotransferase (361 aa).

R42 lines the L-glutamate pocket. Pyridoxal 5'-phosphate contacts are provided by residues 76–77 (AT), W102, T152, D172, and Q195. K196 is subject to N6-(pyridoxal phosphate)lysine. Residue 237–238 (NT) participates in pyridoxal 5'-phosphate binding.

This sequence belongs to the class-V pyridoxal-phosphate-dependent aminotransferase family. SerC subfamily. In terms of assembly, homodimer. It depends on pyridoxal 5'-phosphate as a cofactor.

It localises to the cytoplasm. It catalyses the reaction O-phospho-L-serine + 2-oxoglutarate = 3-phosphooxypyruvate + L-glutamate. The enzyme catalyses 4-(phosphooxy)-L-threonine + 2-oxoglutarate = (R)-3-hydroxy-2-oxo-4-phosphooxybutanoate + L-glutamate. It participates in amino-acid biosynthesis; L-serine biosynthesis; L-serine from 3-phospho-D-glycerate: step 2/3. Its pathway is cofactor biosynthesis; pyridoxine 5'-phosphate biosynthesis; pyridoxine 5'-phosphate from D-erythrose 4-phosphate: step 3/5. In terms of biological role, catalyzes the reversible conversion of 3-phosphohydroxypyruvate to phosphoserine and of 3-hydroxy-2-oxo-4-phosphonooxybutanoate to phosphohydroxythreonine. In Xanthomonas campestris pv. campestris (strain B100), this protein is Phosphoserine aminotransferase.